Reading from the N-terminus, the 162-residue chain is Small ribosomal subunit protein uS9 (162 aa).

This sequence belongs to the universal ribosomal protein uS9 family.

This Methylobacterium nodulans (strain LMG 21967 / CNCM I-2342 / ORS 2060) protein is Small ribosomal subunit protein uS9.